Reading from the N-terminus, the 307-residue chain is Golgi to ER traffic protein 2 (307 aa).

Topologically, residues 1-173 are cytoplasmic; sequence MSDSTDSPAV…QAYDTYQQKL (173 aa). Polar residues predominate over residues 41-52; it reads LSQGSSVKTTGV. Positions 41–73 are disordered; the sequence is LSQGSSVKTTGVKSVLDEPQPTATSSAIHDEDP. The helical transmembrane segment at 174–194 threads the bilayer; that stretch reads WKSRFLVIRVVVTLFNFFYHY. Topologically, residues 195–220 are lumenal; sequence LNVPSFHASNYSYVRDLAQDEFPVRN. A helical membrane pass occupies residues 221–240; the sequence is FFTWFAAFEVIIVLQYYTVF. Topologically, residues 241–284 are cytoplasmic; it reads HKLGLFHAANQNSMIMKLMSMGSMVLPQLNTYQPLVARFLGYYE. Residues 285 to 305 form a helical membrane-spanning segment; sequence LFGIIFGDLSLVIVLFGLLSF. At 306–307 the chain is on the lumenal side; that stretch reads TK.

This sequence belongs to the GET2 family. In terms of assembly, component of the Golgi to ER traffic (GET) complex, which is composed of GET1, GET2 and GET3. Within the complex, GET1 and GET2 form a heterotetramer which is stabilized by phosphatidylinositol binding and which binds to the GET3 homodimer.

The protein localises to the endoplasmic reticulum membrane. It is found in the golgi apparatus membrane. In terms of biological role, required for the post-translational delivery of tail-anchored (TA) proteins to the endoplasmic reticulum. Together with GET1, acts as a membrane receptor for soluble GET3, which recognizes and selectively binds the transmembrane domain of TA proteins in the cytosol. The GET complex cooperates with the HDEL receptor ERD2 to mediate the ATP-dependent retrieval of resident ER proteins that contain a C-terminal H-D-E-L retention signal from the Golgi to the ER. The protein is Golgi to ER traffic protein 2 of Candida tropicalis (strain ATCC MYA-3404 / T1) (Yeast).